Here is a 199-residue protein sequence, read N- to C-terminus: Recombination protein RecR (199 aa).

The C4-type zinc finger occupies 57–72; sequence CSVCGNLTDDDPCNIC. Positions 80 to 176 constitute a Toprim domain; sequence STVLVVEDSK…TVTRLARGLA (97 aa).

The protein belongs to the RecR family.

In terms of biological role, may play a role in DNA repair. It seems to be involved in an RecBC-independent recombinational process of DNA repair. It may act with RecF and RecO. The sequence is that of Recombination protein RecR from Streptococcus mutans serotype c (strain ATCC 700610 / UA159).